Consider the following 201-residue polypeptide: FMN-dependent NADH:quinone oxidoreductase (201 aa).

92–95 (MWNL) provides a ligand contact to FMN.

Belongs to the azoreductase type 1 family. As to quaternary structure, homodimer. It depends on FMN as a cofactor.

The enzyme catalyses 2 a quinone + NADH + H(+) = 2 a 1,4-benzosemiquinone + NAD(+). It carries out the reaction N,N-dimethyl-1,4-phenylenediamine + anthranilate + 2 NAD(+) = 2-(4-dimethylaminophenyl)diazenylbenzoate + 2 NADH + 2 H(+). Functionally, quinone reductase that provides resistance to thiol-specific stress caused by electrophilic quinones. Also exhibits azoreductase activity. Catalyzes the reductive cleavage of the azo bond in aromatic azo compounds to the corresponding amines. In Caldicellulosiruptor saccharolyticus (strain ATCC 43494 / DSM 8903 / Tp8T 6331), this protein is FMN-dependent NADH:quinone oxidoreductase.